A 115-amino-acid polypeptide reads, in one-letter code: Salivary anti-complement protein (115 aa).

An N-terminal signal peptide occupies residues 1–22 (MKFFYLIFSAIFFLADPALVKC). 3 disulfides stabilise this stretch: C26–C108, C41–C92, and C83–C101.

May form multimers. As to expression, salivary gland (at protein level).

The protein resides in the secreted. Its function is as follows. Salivary protein that inhibits the classical pathway of complement system activation in the host while having no inhibitory effect on the alternative or lectin pathways. Prevent cleavage of host C4 and consequently impairs the activation of factors downstream of C4b in the complement cascade. This chain is Salivary anti-complement protein, found in Lutzomyia longipalpis (Sand fly).